The sequence spans 202 residues: MTAPSLAPPRLIVGLGNPGRDYEETRHNAGFWFCARLAQAWGAALAHESRFHGIVGRHGTRWMLLPQTFMNRSGQAVGALARFHRIAPAEILVVHDELDIPPGQLRLKFGGGMGGHNGLKDITAHLGTQDYWRLRIGIGHPGDRSEVVNYVLKPPRREEQADIDAAIERALGLLPLIEKGEWNAATQRANSKPASPKSQETP.

Tyr-22 serves as a coordination point for tRNA. The Proton acceptor role is filled by His-27. Residues Phe-69, Asn-71, and Asn-117 each coordinate tRNA.

This sequence belongs to the PTH family. As to quaternary structure, monomer.

The protein resides in the cytoplasm. The enzyme catalyses an N-acyl-L-alpha-aminoacyl-tRNA + H2O = an N-acyl-L-amino acid + a tRNA + H(+). Functionally, hydrolyzes ribosome-free peptidyl-tRNAs (with 1 or more amino acids incorporated), which drop off the ribosome during protein synthesis, or as a result of ribosome stalling. Its function is as follows. Catalyzes the release of premature peptidyl moieties from peptidyl-tRNA molecules trapped in stalled 50S ribosomal subunits, and thus maintains levels of free tRNAs and 50S ribosomes. The protein is Peptidyl-tRNA hydrolase of Thiobacillus denitrificans (strain ATCC 25259 / T1).